A 461-amino-acid polypeptide reads, in one-letter code: Trigger factor (461 aa).

The PPIase FKBP-type domain maps to 169 to 256 (GDTAVIDFAG…LKDLKIKELP (88 aa)). Residues 432–461 (PGEAIEPGSGEDAPPEVAAGATEPEAQPNS) form a disordered region.

This sequence belongs to the FKBP-type PPIase family. Tig subfamily.

The protein resides in the cytoplasm. It carries out the reaction [protein]-peptidylproline (omega=180) = [protein]-peptidylproline (omega=0). In terms of biological role, involved in protein export. Acts as a chaperone by maintaining the newly synthesized protein in an open conformation. Functions as a peptidyl-prolyl cis-trans isomerase. The sequence is that of Trigger factor from Gloeobacter violaceus (strain ATCC 29082 / PCC 7421).